The primary structure comprises 683 residues: Methionine--tRNA ligase (683 aa).

The 'HIGH' region motif lies at 15–25 (PYANGSIHLGH). Zn(2+) contacts are provided by cysteine 146, cysteine 149, cysteine 159, and cysteine 162. Positions 332-336 (KMSKS) match the 'KMSKS' region motif. Lysine 335 contributes to the ATP binding site. The tRNA-binding domain maps to 582-683 (DFAKVDLRIA…QGAQAGMRVM (102 aa)).

The protein belongs to the class-I aminoacyl-tRNA synthetase family. MetG type 1 subfamily. In terms of assembly, homodimer. The cofactor is Zn(2+).

The protein resides in the cytoplasm. The catalysed reaction is tRNA(Met) + L-methionine + ATP = L-methionyl-tRNA(Met) + AMP + diphosphate. Functionally, is required not only for elongation of protein synthesis but also for the initiation of all mRNA translation through initiator tRNA(fMet) aminoacylation. In Vibrio cholerae serotype O1 (strain ATCC 39541 / Classical Ogawa 395 / O395), this protein is Methionine--tRNA ligase.